We begin with the raw amino-acid sequence, 551 residues long: mRNA cap guanine-N(7) methyltransferase (551 aa).

Over residues 1 to 10 (MENRSSSGTP) the composition is skewed to polar residues. Positions 1–152 (MENRSSSGTP…DRETLRRRQE (152 aa)) are disordered. 2 stretches are compositionally biased toward basic and acidic residues: residues 48–76 (VTEEGEASEKSEPPADRPMSKRKRMEERH) and 141–152 (LVDRETLRRRQE). An mRNA cap 0 methyltransferase domain is found at 194 to 551 (SKIKGLRSFN…FYHAFCFYKV (358 aa)). 203-204 (NN) is an mRNA binding site. S-adenosyl-L-methionine contacts are provided by residues lysine 207, glycine 250, aspartate 274, aspartate 312, 355–357 (MFA), and tyrosine 360. Positions 407-430 (KAREEQEKKEKSDEAPEDGEVEED) are disordered. Over residues 408–420 (AREEQEKKEKSDE) the composition is skewed to basic and acidic residues. Acidic residues predominate over residues 421–430 (APEDGEVEED).

This sequence belongs to the class I-like SAM-binding methyltransferase superfamily. mRNA cap 0 methyltransferase family.

The protein resides in the nucleus. It carries out the reaction a 5'-end (5'-triphosphoguanosine)-ribonucleoside in mRNA + S-adenosyl-L-methionine = a 5'-end (N(7)-methyl 5'-triphosphoguanosine)-ribonucleoside in mRNA + S-adenosyl-L-homocysteine. Responsible for methylating the 5'-cap structure of mRNAs. This Aspergillus clavatus (strain ATCC 1007 / CBS 513.65 / DSM 816 / NCTC 3887 / NRRL 1 / QM 1276 / 107) protein is mRNA cap guanine-N(7) methyltransferase (abd1).